We begin with the raw amino-acid sequence, 192 residues long: Imidazoleglycerol-phosphate dehydratase (192 aa).

It belongs to the imidazoleglycerol-phosphate dehydratase family.

It is found in the cytoplasm. The enzyme catalyses D-erythro-1-(imidazol-4-yl)glycerol 3-phosphate = 3-(imidazol-4-yl)-2-oxopropyl phosphate + H2O. It participates in amino-acid biosynthesis; L-histidine biosynthesis; L-histidine from 5-phospho-alpha-D-ribose 1-diphosphate: step 6/9. The polypeptide is Imidazoleglycerol-phosphate dehydratase (Staphylococcus saprophyticus subsp. saprophyticus (strain ATCC 15305 / DSM 20229 / NCIMB 8711 / NCTC 7292 / S-41)).